The chain runs to 436 residues: GTPase Der (436 aa).

EngA-type G domains follow at residues 4 to 167 (PVIA…PKIE) and 176 to 351 (IRFS…ESHS). GTP-binding positions include 10–17 (GRPNVGKS), 57–61 (DTGGI), 119–122 (NKVD), 182–189 (GRPNVGKS), 229–233 (DTAGM), and 294–297 (NKWD). The KH-like domain maps to 352 to 436 (IRIQTNVLND…PIHIIARARD (85 aa)).

It belongs to the TRAFAC class TrmE-Era-EngA-EngB-Septin-like GTPase superfamily. EngA (Der) GTPase family. As to quaternary structure, associates with the 50S ribosomal subunit.

GTPase that plays an essential role in the late steps of ribosome biogenesis. This is GTPase Der from Bacillus anthracis (strain A0248).